The sequence spans 623 residues: Protein Atg16l2 (623 aa).

The segment covering 64–79 has biased composition (basic and acidic residues); sequence PKDAISTRHEDWREEV. The interval 64–93 is disordered; sequence PKDAISTRHEDWREEVSGTGPDQVSSPASL. Residues 116–229 adopt a coiled-coil conformation; the sequence is VKKSAALDTL…ANQALVSQEL (114 aa). WD repeat units lie at residues 338–377, 382–421, 424–458, 459–502, 504–543, 550–589, and 593–623; these read AHLS…LEAN, GAGG…SKET, GHKD…LGRA, YCSR…CIQV, PVQG…IRQV, KCSS…LETS, and PHCT…VLWH.

It belongs to the WD repeat ATG16 family. In terms of assembly, homooligomer. Heterooligomer with ATG16L2. Interacts with ATG5. Self-oligomerizes to form a 800-kDa complex composed of ATG12-ATG5 and ATG16L2. Interacts with RAB33B. As to expression, widely expressed.

The protein resides in the cytoplasm. Its subcellular location is the cytosol. Its function is as follows. May play a role in regulating epithelial homeostasis in an ATG16L1-dependent manner. The chain is Protein Atg16l2 (Atg16l2) from Mus musculus (Mouse).